Here is a 421-residue protein sequence, read N- to C-terminus: Histidine--tRNA ligase (421 aa).

The protein belongs to the class-II aminoacyl-tRNA synthetase family. As to quaternary structure, homodimer.

It localises to the cytoplasm. It carries out the reaction tRNA(His) + L-histidine + ATP = L-histidyl-tRNA(His) + AMP + diphosphate + H(+). The protein is Histidine--tRNA ligase of Francisella tularensis subsp. novicida (strain U112).